Reading from the N-terminus, the 68-residue chain is Sperm-associated antigen 11A (68 aa).

The signal sequence occupies residues 1 to 19; it reads MKVLLLFAVFFCLVQRNSG. 3 cysteine pairs are disulfide-bonded: cysteine 30/cysteine 59, cysteine 37/cysteine 52, and cysteine 42/cysteine 60.

It belongs to the beta-defensin family. Only expressed in epididymis (middle part of the caput).

Its subcellular location is the secreted. Its function is as follows. Has antimicrobial activity against E.coli. Plays a role in the defense response in the male reproductive tract, contributing to sperm maturation, storage and protection. This chain is Sperm-associated antigen 11A, found in Rattus norvegicus (Rat).